A 116-amino-acid chain; its full sequence is Large ribosomal subunit protein uL18 (116 aa).

This sequence belongs to the universal ribosomal protein uL18 family. As to quaternary structure, part of the 50S ribosomal subunit; part of the 5S rRNA/L5/L18/L25 subcomplex. Contacts the 5S and 23S rRNAs.

This is one of the proteins that bind and probably mediate the attachment of the 5S RNA into the large ribosomal subunit, where it forms part of the central protuberance. This Novosphingobium aromaticivorans (strain ATCC 700278 / DSM 12444 / CCUG 56034 / CIP 105152 / NBRC 16084 / F199) protein is Large ribosomal subunit protein uL18.